Consider the following 146-residue polypeptide: MHPLLNPLLLALGLMALLLTTVIALTCLGGFASPGPVPPSTALRELIEELVNITQNQKAPLCNGSMVWSINLTAGMYCAALESLINVSGCSAIEKTQRMLSGFCPHKVSAGQFSSLHVRDTKIEVAQFVKDLLLHLKKLFREGQFN.

A signal peptide spans 1 to 24 (MHPLLNPLLLALGLMALLLTTVIA). Residues N52, N63, N71, and N86 are each glycosylated (N-linked (GlcNAc...) asparagine). 2 disulfides stabilise this stretch: C62/C90 and C78/C104.

This sequence belongs to the IL-4/IL-13 family. In terms of assembly, interacts with IL13RA2.

The protein localises to the secreted. Cytokine that plays important roles in allergic inflammation and immune response to parasite infection. Synergizes with IL2 in regulating interferon-gamma synthesis. Stimulates B-cell proliferation, and activation of eosinophils, basophils, and mast cells. Plays an important role in controlling IL33 activity by modulating the production of transmembrane and soluble forms of interleukin-1 receptor-like 1/IL1RL1. Displays the capacity to antagonize Th1-driven proinflammatory immune response and downregulates synthesis of many proinflammatory cytokines including IL1, IL6, IL10, IL12 and TNF-alpha through a mechanism that partially involves suppression of NF-kappa-B. Also functions on nonhematopoietic cells, including endothelial cells where it induces vascular cell adhesion protein 1/VCAM1, which is important in the recruitment of eosinophils. Exerts its biological effects through its receptors which comprises the IL4R chain and the IL13RA1 chain, to activate JAK1 and TYK2, leading to the activation of STAT6. Aside from IL13RA1, another receptor IL13RA2 acts as a high affinity decoy for IL13 and mediates internalization and depletion of extracellular IL13. This chain is Interleukin-13 (IL13), found in Homo sapiens (Human).